Reading from the N-terminus, the 943-residue chain is Isoleucine--tRNA ligase (943 aa).

Residues 58-68 carry the 'HIGH' region motif; that stretch reads PYANGSIHIGH. Residue Glu-567 participates in L-isoleucyl-5'-AMP binding. The 'KMSKS' region signature appears at 608-612; the sequence is KMSKS. ATP is bound at residue Lys-611. Cys-906, Cys-909, Cys-926, and Cys-929 together coordinate Zn(2+).

Belongs to the class-I aminoacyl-tRNA synthetase family. IleS type 1 subfamily. As to quaternary structure, monomer. Zn(2+) serves as cofactor.

It is found in the cytoplasm. It carries out the reaction tRNA(Ile) + L-isoleucine + ATP = L-isoleucyl-tRNA(Ile) + AMP + diphosphate. Its function is as follows. Catalyzes the attachment of isoleucine to tRNA(Ile). As IleRS can inadvertently accommodate and process structurally similar amino acids such as valine, to avoid such errors it has two additional distinct tRNA(Ile)-dependent editing activities. One activity is designated as 'pretransfer' editing and involves the hydrolysis of activated Val-AMP. The other activity is designated 'posttransfer' editing and involves deacylation of mischarged Val-tRNA(Ile). This Pseudomonas aeruginosa (strain ATCC 15692 / DSM 22644 / CIP 104116 / JCM 14847 / LMG 12228 / 1C / PRS 101 / PAO1) protein is Isoleucine--tRNA ligase.